The following is a 545-amino-acid chain: CTP synthase (545 aa).

Residues 1–265 form an amidoligase domain region; that stretch reads MTKYIFITGG…DEIVVKKLSL (265 aa). CTP is bound at residue serine 13. Serine 13 contributes to the UTP binding site. Residues 14 to 19 and aspartate 71 contribute to the ATP site; that span reads SLGKGI. Mg(2+) is bound by residues aspartate 71 and glutamate 139. Residues 146–148, 186–191, and lysine 222 contribute to the CTP site; these read DIE and KTKPTQ. UTP-binding positions include 186 to 191 and lysine 222; that span reads KTKPTQ. In terms of domain architecture, Glutamine amidotransferase type-1 spans 290–541; the sequence is KIAMVGKYTE…VFAARIHHQE (252 aa). Residue glycine 351 coordinates L-glutamine. Catalysis depends on cysteine 378, which acts as the Nucleophile; for glutamine hydrolysis. L-glutamine is bound by residues 379–382, glutamate 402, and arginine 469; that span reads LGMQ. Catalysis depends on residues histidine 514 and glutamate 516.

The protein belongs to the CTP synthase family. In terms of assembly, homotetramer.

It catalyses the reaction UTP + L-glutamine + ATP + H2O = CTP + L-glutamate + ADP + phosphate + 2 H(+). It carries out the reaction L-glutamine + H2O = L-glutamate + NH4(+). The catalysed reaction is UTP + NH4(+) + ATP = CTP + ADP + phosphate + 2 H(+). Its pathway is pyrimidine metabolism; CTP biosynthesis via de novo pathway; CTP from UDP: step 2/2. Its activity is regulated as follows. Allosterically activated by GTP, when glutamine is the substrate; GTP has no effect on the reaction when ammonia is the substrate. The allosteric effector GTP functions by stabilizing the protein conformation that binds the tetrahedral intermediate(s) formed during glutamine hydrolysis. Inhibited by the product CTP, via allosteric rather than competitive inhibition. Functionally, catalyzes the ATP-dependent amination of UTP to CTP with either L-glutamine or ammonia as the source of nitrogen. Regulates intracellular CTP levels through interactions with the four ribonucleotide triphosphates. The sequence is that of CTP synthase from Legionella pneumophila (strain Lens).